Here is a 253-residue protein sequence, read N- to C-terminus: Polyprenal reductase (253 aa).

The next 4 helical transmembrane spans lie at 18 to 38 (LSFF…PEFL), 78 to 98 (FLSL…IIFG), 123 to 143 (HYLV…ISLY), and 200 to 220 (IIYS…VWVI).

Belongs to the steroid 5-alpha reductase family. Polyprenal reductase subfamily.

It localises to the endoplasmic reticulum membrane. The catalysed reaction is a di-trans,poly-cis-dolichal + NADP(+) = a di-trans,poly-cis-polyprenal + NADPH + H(+). It functions in the pathway protein modification; protein glycosylation. In terms of biological role, plays a key role in early steps of protein N-linked glycosylation by being involved in the conversion of polyprenol into dolichol. Acts as a polyprenal reductase that mediates the reduction of polyprenal into dolichal in a NADP-dependent mechanism. Dolichols are required for the synthesis of dolichol-linked monosaccharides and the oligosaccharide precursor used for N-glycosylation. The chain is Polyprenal reductase from Saccharomyces cerevisiae (strain ATCC 204508 / S288c) (Baker's yeast).